The sequence spans 405 residues: NADH-quinone oxidoreductase subunit D (405 aa).

Belongs to the complex I 49 kDa subunit family. In terms of assembly, NDH-1 is composed of 14 different subunits. Subunits NuoB, C, D, E, F, and G constitute the peripheral sector of the complex.

The protein localises to the cell inner membrane. The catalysed reaction is a quinone + NADH + 5 H(+)(in) = a quinol + NAD(+) + 4 H(+)(out). Functionally, NDH-1 shuttles electrons from NADH, via FMN and iron-sulfur (Fe-S) centers, to quinones in the respiratory chain. The immediate electron acceptor for the enzyme in this species is believed to be ubiquinone. Couples the redox reaction to proton translocation (for every two electrons transferred, four hydrogen ions are translocated across the cytoplasmic membrane), and thus conserves the redox energy in a proton gradient. In Afipia carboxidovorans (strain ATCC 49405 / DSM 1227 / KCTC 32145 / OM5) (Oligotropha carboxidovorans), this protein is NADH-quinone oxidoreductase subunit D.